Reading from the N-terminus, the 95-residue chain is Small ribosomal subunit protein uS19 (95 aa).

Belongs to the universal ribosomal protein uS19 family.

Its function is as follows. Protein S19 forms a complex with S13 that binds strongly to the 16S ribosomal RNA. This is Small ribosomal subunit protein uS19 from Thermosipho melanesiensis (strain DSM 12029 / CIP 104789 / BI429).